The primary structure comprises 454 residues: UPF0210 protein Cphy_2797 (454 aa).

Belongs to the UPF0210 family. Homodimer.

The protein is UPF0210 protein Cphy_2797 of Lachnoclostridium phytofermentans (strain ATCC 700394 / DSM 18823 / ISDg) (Clostridium phytofermentans).